The sequence spans 119 residues: MEGDVDEDDGTFTNISLADDSADGEPTVLRFRSEEQYSTMNCEIDGDMENQVEQEEKTRLINQVLELQHTLEDLSARVDAVKEENLKLKSENQVLGQYIENLMSASSVFQTTDTKSKRK.

The span at 1–10 shows a compositional bias: acidic residues; sequence MEGDVDEDDG. Residues 1 to 26 form a disordered region; the sequence is MEGDVDEDDGTFTNISLADDSADGEP. A coiled-coil region spans residues 48–95; it reads MENQVEQEEKTRLINQVLELQHTLEDLSARVDAVKEENLKLKSENQVL.

This sequence belongs to the SCOC family.

The protein resides in the golgi apparatus membrane. It localises to the golgi apparatus. The protein localises to the trans-Golgi network. It is found in the cytoplasm. Its subcellular location is the cytosol. Functionally, positive regulator of amino acid starvation-induced autophagy. The sequence is that of Short coiled-coil protein A (scoca) from Danio rerio (Zebrafish).